The chain runs to 228 residues: Response regulator MprA (228 aa).

The Response regulatory domain occupies 2 to 116 (RILVVDDDRA…ELLARMRALL (115 aa)). Asp-46 carries the 4-aspartylphosphate modification. Positions 127 to 225 (SVAMTFSDLT…VRGVGYVLRE (99 aa)) form a DNA-binding region, ompR/PhoB-type.

In terms of processing, phosphorylated and dephosphorylated by MprB.

The protein localises to the cytoplasm. Its function is as follows. Member of the two-component regulatory system MprB/MprA which contributes to maintaining a balance among several systems involved in stress resistance and is required for establishment and maintenance of persistent infection in the host. Functions as a transcriptional regulator that recognizes a 19-bp nucleotide motif comprizing two loosely conserved 8-bp direct DNA-binding motif repeats separated by a 3-bp spacer region. The protein is Response regulator MprA (mprA) of Mycobacterium avium (strain 104).